The sequence spans 175 residues: Alpha-crystallin B chain (175 aa).

N-acetylmethionine is present on M1. S19 carries the phosphoserine modification. The O-linked (GlcNAc) serine glycan is linked to S41. A phosphoserine mark is found at S45 and S59. In terms of domain architecture, sHSP spans 56-164 (RAPSWIDTGL…PERTIPITRE (109 aa)). H83 contributes to the Zn(2+) binding site. A glycan (N-linked (Glc) (glycation) lysine) is linked at K90. K92 carries the post-translational modification N6-acetyllysine; alternate. N-linked (Glc) (glycation) lysine; alternate glycosylation occurs at K92. Zn(2+) contacts are provided by H104, E106, H111, and H119. Residues 144–175 (TVNGPRKQASGPERTIPITREEKPAVTAAPKK) are disordered. N6-acetyllysine is present on K166. Residue T170 is glycosylated (O-linked (GlcNAc) threonine).

It belongs to the small heat shock protein (HSP20) family. As to quaternary structure, heteromer composed of three CRYAA and one CRYAB subunits. Aggregates with homologous proteins, including the small heat shock protein HSPB1, to form large heteromeric complexes. Inter-subunit bridging via zinc ions enhances stability, which is crucial as there is no protein turn over in the lens. Interacts with HSPBAP1 and TTN/titin. Interacts with TMEM109; in the cellular response to DNA damage. Interacts with DES; binds rapidly during early stages of DES filament assembly and a reduced binding seen in the later stages. Interacts with TMED10; the interaction mediates the translocation from the cytoplasm into the ERGIC (endoplasmic reticulum-Golgi intermediate compartment) and thereby secretion. Interacts with ATP6V1A and with MTOR, forming a ternary complex. Post-translationally, it is not known whether either Lys-90, or Lys-92, or both are glycated. Lens as well as other tissues.

The protein resides in the cytoplasm. It is found in the nucleus. It localises to the secreted. Its subcellular location is the lysosome. May contribute to the transparency and refractive index of the lens. Has chaperone-like activity, preventing aggregation of various proteins under a wide range of stress conditions. In lens epithelial cells, stabilizes the ATP6V1A protein, preventing its degradation by the proteasome. The protein is Alpha-crystallin B chain (CRYAB) of Bos taurus (Bovine).